Reading from the N-terminus, the 949-residue chain is Translation initiation factor IF-2 (949 aa).

Disordered regions lie at residues 54 to 183, 217 to 288, and 305 to 357; these read FLKP…EAAP, LPAA…EVAL, and EVVA…EMQA. Basic and acidic residues-rich tracts occupy residues 67–92 and 101–164; these read DQEKPEEIEEKKEAPKSPKRGEERHI and IEAK…EEAA. Low complexity-rich tracts occupy residues 165 to 183 and 217 to 228; these read RAAAAAPAAPVAAPAEAAP and LPAAAPAAPSAP. 2 stretches are compositionally biased toward basic and acidic residues: residues 235–288 and 330–339; these read PVEE…EVAL and KYQDNEDRLQ. The tr-type G domain maps to 445 to 619; it reads TRPPVITVMG…EMLNLQSNPT (175 aa). A G1 region spans residues 454 to 461; it reads GHVDHGKT. A GTP-binding site is contributed by 454–461; it reads GHVDHGKT. Residues 479–483 are G2; the sequence is GITQH. The segment at 501-504 is G3; that stretch reads DTPG. GTP-binding positions include 501 to 505 and 555 to 558; these read DTPGH and NKID. Residues 555–558 are G4; it reads NKID. A G5 region spans residues 591 to 593; the sequence is SAK.

This sequence belongs to the TRAFAC class translation factor GTPase superfamily. Classic translation factor GTPase family. IF-2 subfamily.

The protein resides in the cytoplasm. In terms of biological role, one of the essential components for the initiation of protein synthesis. Protects formylmethionyl-tRNA from spontaneous hydrolysis and promotes its binding to the 30S ribosomal subunits. Also involved in the hydrolysis of GTP during the formation of the 70S ribosomal complex. The protein is Translation initiation factor IF-2 of Magnetococcus marinus (strain ATCC BAA-1437 / JCM 17883 / MC-1).